Reading from the N-terminus, the 206-residue chain is Phosphatidyl-N-methylethanolamine N-methyltransferase (206 aa).

Residues 1 to 20 (MKESVQEIIQQLIHSVDLQS) lie on the Lumenal side of the membrane. Positions 21–41 (SKFQLAIVCTMFNPIFWNIVA) form an intramembrane region, helical. Topologically, residues 42-53 (RMEYHKHSLTKM) are lumenal. Residues 54–74 (CGGARKGCYMLAATIFSLGIV) traverse the membrane as a helical segment. Topologically, residues 75-101 (RDMVYESALREQPTCSLITGENWTKLG) are cytoplasmic. A helical membrane pass occupies residues 102–122 (VALFGLGQVLVLSSMYKLGIT). 106–108 (GLG) contacts S-adenosyl-L-methionine. Residues 123–165 (GTYLGDYFGILMDERVTGFPFNVSNNPMYQGSTLSFLGIALYK) lie on the Lumenal side of the membrane. A helical transmembrane segment spans residues 166-186 (GKPAGLVVSAVVYFMYKIALR). At 187 to 206 (WEEPFTAMIYANRDKAKKNM) the chain is on the cytoplasmic side. 188–189 (EE) is an S-adenosyl-L-methionine binding site.

It belongs to the class VI-like SAM-binding methyltransferase superfamily. PEMT/PEM2 methyltransferase family.

It is found in the endoplasmic reticulum membrane. The protein localises to the mitochondrion membrane. The enzyme catalyses a 1,2-diacyl-sn-glycero-3-phosphoethanolamine + S-adenosyl-L-methionine = a 1,2-diacyl-sn-glycero-3-phospho-N-methylethanolamine + S-adenosyl-L-homocysteine + H(+). It carries out the reaction a 1,2-diacyl-sn-glycero-3-phospho-N-methylethanolamine + S-adenosyl-L-methionine = a 1,2-diacyl-sn-glycero-3-phospho-N,N-dimethylethanolamine + S-adenosyl-L-homocysteine + H(+). It catalyses the reaction a 1,2-diacyl-sn-glycero-3-phospho-N,N-dimethylethanolamine + S-adenosyl-L-methionine = a 1,2-diacyl-sn-glycero-3-phosphocholine + S-adenosyl-L-homocysteine + H(+). It participates in phospholipid metabolism; phosphatidylcholine biosynthesis. Catalyzes the second two steps of the methylation pathway of phosphatidylcholine biosynthesis, the SAM-dependent methylation of phosphatidylmonomethylethanolamine (PMME) to phosphatidyldimethylethanolamine (PDME) and of PDME to phosphatidylcholine (PC). Can also catalyze the first methylation reaction of PE to PMME in the absence of PE methyltransferase CHO2. The sequence is that of Phosphatidyl-N-methylethanolamine N-methyltransferase from Saccharomyces cerevisiae (strain ATCC 204508 / S288c) (Baker's yeast).